Here is a 389-residue protein sequence, read N- to C-terminus: Glutamate 5-kinase (389 aa).

Residue Lys16 coordinates ATP. Substrate is bound by residues Ser56, Asp143, and Asn155. 175-176 contributes to the ATP binding site; sequence SD. Residues 281–358 form the PUA domain; it reads AGELHVDDGA…AEIEAILGYA (78 aa).

The protein belongs to the glutamate 5-kinase family.

It is found in the cytoplasm. The enzyme catalyses L-glutamate + ATP = L-glutamyl 5-phosphate + ADP. The protein operates within amino-acid biosynthesis; L-proline biosynthesis; L-glutamate 5-semialdehyde from L-glutamate: step 1/2. In terms of biological role, catalyzes the transfer of a phosphate group to glutamate to form L-glutamate 5-phosphate. This is Glutamate 5-kinase from Rhizobium etli (strain CIAT 652).